We begin with the raw amino-acid sequence, 337 residues long: DNA-directed RNA polymerase subunit alpha (337 aa).

The interval 1–231 is alpha N-terminal domain (alpha-NTD); that stretch reads MRNITTSAYT…KQLSVFDKIT (231 aa). The alpha C-terminal domain (alpha-CTD) stretch occupies residues 247–337; sequence ENTKLLQNIT…IAELKAQNEG (91 aa).

It belongs to the RNA polymerase alpha chain family. As to quaternary structure, homodimer. The RNAP catalytic core consists of 2 alpha, 1 beta, 1 beta' and 1 omega subunit. When a sigma factor is associated with the core the holoenzyme is formed, which can initiate transcription.

The catalysed reaction is RNA(n) + a ribonucleoside 5'-triphosphate = RNA(n+1) + diphosphate. Its function is as follows. DNA-dependent RNA polymerase catalyzes the transcription of DNA into RNA using the four ribonucleoside triphosphates as substrates. The polypeptide is DNA-directed RNA polymerase subunit alpha (Campylobacter jejuni subsp. jejuni serotype O:2 (strain ATCC 700819 / NCTC 11168)).